Reading from the N-terminus, the 379-residue chain is Cobalt-precorrin-5B C(1)-methyltransferase (379 aa).

This sequence belongs to the CbiD family.

The catalysed reaction is Co-precorrin-5B + S-adenosyl-L-methionine = Co-precorrin-6A + S-adenosyl-L-homocysteine. The protein operates within cofactor biosynthesis; adenosylcobalamin biosynthesis; cob(II)yrinate a,c-diamide from sirohydrochlorin (anaerobic route): step 6/10. Functionally, catalyzes the methylation of C-1 in cobalt-precorrin-5B to form cobalt-precorrin-6A. This is Cobalt-precorrin-5B C(1)-methyltransferase from Salmonella dublin (strain CT_02021853).